The chain runs to 916 residues: Protein translocase subunit SecA (916 aa).

ATP contacts are provided by residues Gln-86, 104-108, and Asp-494; that span reads GEGKT. The disordered stretch occupies residues 859–916; that stretch reads LEAPEKPAQLQYTAPSEGGGTQTRVETRSTGRSGNPAKAAEQDAAKDAAKRPAKKKRR. The segment covering 880–891 has biased composition (polar residues); sequence QTRVETRSTGRS. Basic and acidic residues predominate over residues 898–908; sequence AEQDAAKDAAK.

Belongs to the SecA family. Monomer and homodimer. Part of the essential Sec protein translocation apparatus which comprises SecA, SecYEG and auxiliary proteins SecDF. Other proteins may also be involved.

The protein resides in the cell membrane. It is found in the cytoplasm. The catalysed reaction is ATP + H2O + cellular proteinSide 1 = ADP + phosphate + cellular proteinSide 2.. Functionally, part of the Sec protein translocase complex. Interacts with the SecYEG preprotein conducting channel. Has a central role in coupling the hydrolysis of ATP to the transfer of proteins into and across the cell membrane, serving as an ATP-driven molecular motor driving the stepwise translocation of polypeptide chains across the membrane. This chain is Protein translocase subunit SecA, found in Pseudarthrobacter chlorophenolicus (strain ATCC 700700 / DSM 12829 / CIP 107037 / JCM 12360 / KCTC 9906 / NCIMB 13794 / A6) (Arthrobacter chlorophenolicus).